We begin with the raw amino-acid sequence, 78 residues long: Small integral membrane protein 10-like protein 2A (78 aa).

This Homo sapiens (Human) protein is Small integral membrane protein 10-like protein 2A.